The primary structure comprises 491 residues: Aspartyl/glutamyl-tRNA(Asn/Gln) amidotransferase subunit B (491 aa).

The protein belongs to the GatB/GatE family. GatB subfamily. Heterotrimer of A, B and C subunits.

The enzyme catalyses L-glutamyl-tRNA(Gln) + L-glutamine + ATP + H2O = L-glutaminyl-tRNA(Gln) + L-glutamate + ADP + phosphate + H(+). The catalysed reaction is L-aspartyl-tRNA(Asn) + L-glutamine + ATP + H2O = L-asparaginyl-tRNA(Asn) + L-glutamate + ADP + phosphate + 2 H(+). Functionally, allows the formation of correctly charged Asn-tRNA(Asn) or Gln-tRNA(Gln) through the transamidation of misacylated Asp-tRNA(Asn) or Glu-tRNA(Gln) in organisms which lack either or both of asparaginyl-tRNA or glutaminyl-tRNA synthetases. The reaction takes place in the presence of glutamine and ATP through an activated phospho-Asp-tRNA(Asn) or phospho-Glu-tRNA(Gln). The polypeptide is Aspartyl/glutamyl-tRNA(Asn/Gln) amidotransferase subunit B (Paraburkholderia phymatum (strain DSM 17167 / CIP 108236 / LMG 21445 / STM815) (Burkholderia phymatum)).